A 122-amino-acid polypeptide reads, in one-letter code: Large ribosomal subunit protein uL14c (122 aa).

This sequence belongs to the universal ribosomal protein uL14 family. As to quaternary structure, part of the 50S ribosomal subunit.

It is found in the plastid. It localises to the chloroplast. Functionally, binds to 23S rRNA. This chain is Large ribosomal subunit protein uL14c, found in Physcomitrium patens (Spreading-leaved earth moss).